Reading from the N-terminus, the 406-residue chain is Cysteine desulfurase (406 aa).

Residue Lys-226 is modified to N6-(pyridoxal phosphate)lysine. The active-site Cysteine persulfide intermediate is the Cys-364.

Belongs to the class-V pyridoxal-phosphate-dependent aminotransferase family. Csd subfamily. As to quaternary structure, homodimer. Interacts with SufE and the SufBCD complex composed of SufB, SufC and SufD. The interaction with SufE is required to mediate the direct transfer of the sulfur atom from the S-sulfanylcysteine. Requires pyridoxal 5'-phosphate as cofactor.

The protein localises to the cytoplasm. It carries out the reaction (sulfur carrier)-H + L-cysteine = (sulfur carrier)-SH + L-alanine. It catalyses the reaction L-selenocysteine + AH2 = hydrogenselenide + L-alanine + A + H(+). The protein operates within cofactor biosynthesis; iron-sulfur cluster biosynthesis. In terms of biological role, cysteine desulfurases mobilize the sulfur from L-cysteine to yield L-alanine, an essential step in sulfur metabolism for biosynthesis of a variety of sulfur-containing biomolecules. Component of the suf operon, which is activated and required under specific conditions such as oxidative stress and iron limitation. Acts as a potent selenocysteine lyase in vitro, that mobilizes selenium from L-selenocysteine. Selenocysteine lyase activity is however unsure in vivo. The sequence is that of Cysteine desulfurase from Yersinia pestis bv. Antiqua (strain Angola).